Reading from the N-terminus, the 136-residue chain is DNA-directed RNA polymerase subunit omega (136 aa).

Low complexity predominate over residues 90 to 102 (SSPAAAAVAPQSS). The disordered stretch occupies residues 90 to 136 (SSPAAAAVAPQSSSDDKDVQFDRMSEEDLLRGLENLAPPTETDDEGE). The segment covering 103-120 (SDDKDVQFDRMSEEDLLR) has biased composition (basic and acidic residues).

Belongs to the RNA polymerase subunit omega family. The RNAP catalytic core consists of 2 alpha, 1 beta, 1 beta' and 1 omega subunit. When a sigma factor is associated with the core the holoenzyme is formed, which can initiate transcription.

It carries out the reaction RNA(n) + a ribonucleoside 5'-triphosphate = RNA(n+1) + diphosphate. Its function is as follows. Promotes RNA polymerase assembly. Latches the N- and C-terminal regions of the beta' subunit thereby facilitating its interaction with the beta and alpha subunits. The protein is DNA-directed RNA polymerase subunit omega of Methylorubrum populi (strain ATCC BAA-705 / NCIMB 13946 / BJ001) (Methylobacterium populi).